The primary structure comprises 414 residues: DNA polymerase IV (414 aa).

The UmuC domain occupies 8–189; that stretch reads IFHIDMNSFY…LPIEEMHGIG (182 aa). 2 residues coordinate Mg(2+): aspartate 12 and aspartate 108. Glutamate 109 is an active-site residue. The interval 394–414 is disordered; it reads EESKTRGTSFNRDFFQDEKKR.

The protein belongs to the DNA polymerase type-Y family. As to quaternary structure, monomer. Mg(2+) is required as a cofactor.

Its subcellular location is the cytoplasm. It catalyses the reaction DNA(n) + a 2'-deoxyribonucleoside 5'-triphosphate = DNA(n+1) + diphosphate. Functionally, poorly processive, error-prone DNA polymerase involved in untargeted mutagenesis. Copies undamaged DNA at stalled replication forks, which arise in vivo from mismatched or misaligned primer ends. These misaligned primers can be extended by PolIV. Exhibits no 3'-5' exonuclease (proofreading) activity. May be involved in translesional synthesis, in conjunction with the beta clamp from PolIII. The protein is DNA polymerase IV of Bacillus velezensis (strain DSM 23117 / BGSC 10A6 / LMG 26770 / FZB42) (Bacillus amyloliquefaciens subsp. plantarum).